A 206-amino-acid chain; its full sequence is Large ribosomal subunit protein uL4 (206 aa).

The interval 45–85 (QGNRAQKDREQVKHTTKKPWRQKGTGRARAGMSSSPLWRGG) is disordered. Over residues 58–70 (HTTKKPWRQKGTG) the composition is skewed to basic residues.

This sequence belongs to the universal ribosomal protein uL4 family. As to quaternary structure, part of the 50S ribosomal subunit.

Functionally, one of the primary rRNA binding proteins, this protein initially binds near the 5'-end of the 23S rRNA. It is important during the early stages of 50S assembly. It makes multiple contacts with different domains of the 23S rRNA in the assembled 50S subunit and ribosome. In terms of biological role, forms part of the polypeptide exit tunnel. The polypeptide is Large ribosomal subunit protein uL4 (Burkholderia mallei (strain NCTC 10247)).